Reading from the N-terminus, the 527-residue chain is Anthranilate synthase component 1 1 (527 aa).

S52 contributes to the L-tryptophan binding site. The interval 53-72 (AEKTPASDPDGAFTPDTTTE) is disordered. L-tryptophan is bound at residue 298 to 300 (PYM). 333–334 (GT) is a binding site for chorismate. E360 provides a ligand contact to Mg(2+). Chorismate-binding positions include Y448, R468, 486 to 488 (GAG), and G488. Position 501 (E501) interacts with Mg(2+).

This sequence belongs to the anthranilate synthase component I family. As to quaternary structure, tetramer of two components I and two components II. Mg(2+) is required as a cofactor.

It carries out the reaction chorismate + L-glutamine = anthranilate + pyruvate + L-glutamate + H(+). Its pathway is amino-acid biosynthesis; L-tryptophan biosynthesis; L-tryptophan from chorismate: step 1/5. The chain is Anthranilate synthase component 1 1 (trpE1) from Halobacterium salinarum (strain ATCC 700922 / JCM 11081 / NRC-1) (Halobacterium halobium).